A 324-amino-acid chain; its full sequence is D-alanine--D-alanine ligase (324 aa).

The ATP-grasp domain maps to 121-321; the sequence is NQYLKGFGIR…IKDVMTDIIE (201 aa). An ATP-binding site is contributed by 149–204; it reads INKIGLPCFIKPNAGGSSFGVTKVKTKEDIQPAIEKAFEESDEVMIEAFMKGTEIT. 3 residues coordinate Mg(2+): Asp275, Glu288, and Asn290.

Belongs to the D-alanine--D-alanine ligase family. Mg(2+) serves as cofactor. Mn(2+) is required as a cofactor.

It localises to the cytoplasm. The catalysed reaction is 2 D-alanine + ATP = D-alanyl-D-alanine + ADP + phosphate + H(+). It participates in cell wall biogenesis; peptidoglycan biosynthesis. Cell wall formation. The polypeptide is D-alanine--D-alanine ligase (Phocaeicola vulgatus (strain ATCC 8482 / DSM 1447 / JCM 5826 / CCUG 4940 / NBRC 14291 / NCTC 11154) (Bacteroides vulgatus)).